Here is a 312-residue protein sequence, read N- to C-terminus: Glutaminase (312 aa).

Serine 67, asparagine 118, glutamate 162, asparagine 169, tyrosine 193, tyrosine 245, and valine 263 together coordinate substrate.

Belongs to the glutaminase family. Homotetramer.

It carries out the reaction L-glutamine + H2O = L-glutamate + NH4(+). The chain is Glutaminase from Bordetella avium (strain 197N).